The sequence spans 266 residues: Glucosamine-6-phosphate deaminase (266 aa).

Asp72 (proton acceptor; for enolization step) is an active-site residue. The For ring-opening step role is filled by Asp141. Catalysis depends on His143, which acts as the Proton acceptor; for ring-opening step. Catalysis depends on Glu148, which acts as the For ring-opening step.

The protein belongs to the glucosamine/galactosamine-6-phosphate isomerase family. NagB subfamily. Homohexamer.

It catalyses the reaction alpha-D-glucosamine 6-phosphate + H2O = beta-D-fructose 6-phosphate + NH4(+). The protein operates within amino-sugar metabolism; N-acetylneuraminate degradation; D-fructose 6-phosphate from N-acetylneuraminate: step 5/5. With respect to regulation, allosterically activated by N-acetylglucosamine 6-phosphate (GlcNAc6P). Catalyzes the reversible isomerization-deamination of glucosamine 6-phosphate (GlcN6P) to form fructose 6-phosphate (Fru6P) and ammonium ion. The sequence is that of Glucosamine-6-phosphate deaminase from Salmonella typhimurium (strain LT2 / SGSC1412 / ATCC 700720).